Consider the following 347-residue polypeptide: tRNA N6-adenosine threonylcarbamoyltransferase (347 aa).

The Fe cation site is built by H109 and H113. Substrate-binding positions include 136–140 (TVSGG), D169, G182, D186, and N284. Residue D312 coordinates Fe cation.

Belongs to the KAE1 / TsaD family. The cofactor is Fe(2+).

It is found in the cytoplasm. The enzyme catalyses L-threonylcarbamoyladenylate + adenosine(37) in tRNA = N(6)-L-threonylcarbamoyladenosine(37) in tRNA + AMP + H(+). Functionally, required for the formation of a threonylcarbamoyl group on adenosine at position 37 (t(6)A37) in tRNAs that read codons beginning with adenine. Is involved in the transfer of the threonylcarbamoyl moiety of threonylcarbamoyl-AMP (TC-AMP) to the N6 group of A37, together with TsaE and TsaB. TsaD likely plays a direct catalytic role in this reaction. The sequence is that of tRNA N6-adenosine threonylcarbamoyltransferase from Chlorobium phaeobacteroides (strain BS1).